Reading from the N-terminus, the 157-residue chain is Transcription elongation factor GreA (157 aa).

Positions Glu17–Glu37 form a coiled coil.

It belongs to the GreA/GreB family.

Necessary for efficient RNA polymerase transcription elongation past template-encoded arresting sites. The arresting sites in DNA have the property of trapping a certain fraction of elongating RNA polymerases that pass through, resulting in locked ternary complexes. Cleavage of the nascent transcript by cleavage factors such as GreA or GreB allows the resumption of elongation from the new 3'terminus. GreA releases sequences of 2 to 3 nucleotides. In Vibrio parahaemolyticus serotype O3:K6 (strain RIMD 2210633), this protein is Transcription elongation factor GreA.